The sequence spans 424 residues: Histidine--tRNA ligase (424 aa).

The protein belongs to the class-II aminoacyl-tRNA synthetase family. Homodimer.

It is found in the cytoplasm. It carries out the reaction tRNA(His) + L-histidine + ATP = L-histidyl-tRNA(His) + AMP + diphosphate + H(+). This is Histidine--tRNA ligase from Desulfitobacterium hafniense (strain DSM 10664 / DCB-2).